We begin with the raw amino-acid sequence, 390 residues long: 1-deoxy-D-xylulose 5-phosphate reductoisomerase (390 aa).

8 residues coordinate NADPH: T10, G11, S12, I13, G36, R37, N38, and N121. K122 is a binding site for 1-deoxy-D-xylulose 5-phosphate. Position 123 (E123) interacts with NADPH. A Mn(2+)-binding site is contributed by D147. 4 residues coordinate 1-deoxy-D-xylulose 5-phosphate: S148, E149, S173, and H196. Residue E149 participates in Mn(2+) binding. Residue G202 coordinates NADPH. Residues S209, N214, K215, and E218 each coordinate 1-deoxy-D-xylulose 5-phosphate. E218 serves as a coordination point for Mn(2+). The segment at 367–390 (AASEHGRREAEKRVGARAHAPAGR) is disordered. Over residues 370 to 380 (EHGRREAEKRV) the composition is skewed to basic and acidic residues.

Belongs to the DXR family. The cofactor is Mg(2+). Requires Mn(2+) as cofactor.

It catalyses the reaction 2-C-methyl-D-erythritol 4-phosphate + NADP(+) = 1-deoxy-D-xylulose 5-phosphate + NADPH + H(+). Its pathway is isoprenoid biosynthesis; isopentenyl diphosphate biosynthesis via DXP pathway; isopentenyl diphosphate from 1-deoxy-D-xylulose 5-phosphate: step 1/6. Catalyzes the NADPH-dependent rearrangement and reduction of 1-deoxy-D-xylulose-5-phosphate (DXP) to 2-C-methyl-D-erythritol 4-phosphate (MEP). This Anaeromyxobacter sp. (strain K) protein is 1-deoxy-D-xylulose 5-phosphate reductoisomerase.